The primary structure comprises 269 residues: Putative 6-phosphogluconolactonase (269 aa).

Positions 248-269 (DAATGVPDRDSSDSDSPPPFDG) are disordered.

It belongs to the glucosamine/galactosamine-6-phosphate isomerase family. 6-phosphogluconolactonase subfamily.

Its subcellular location is the nucleus. The catalysed reaction is 6-phospho-D-glucono-1,5-lactone + H2O = 6-phospho-D-gluconate + H(+). Its pathway is carbohydrate degradation; pentose phosphate pathway; D-ribulose 5-phosphate from D-glucose 6-phosphate (oxidative stage): step 2/3. In terms of biological role, hydrolysis of 6-phosphogluconolactone to 6-phosphogluconate. The protein is Putative 6-phosphogluconolactonase of Caenorhabditis elegans.